The chain runs to 285 residues: MSVTTCQILDGKALAQKIQLGLGERIQTLKSPMGRPPGLAVLMVGDNPASAVYVRNKEKACTKIGMASFGRHFSTDTSELEILAEIVRLNQDERVDGILIQLPLPKHLDAVSLLYQIDPKKDADGLHPLNLGGLVRGEDCIRSCTPAGVMALLKEYNIPIAGKHAVVVGRSILVGKPLALMLLEENATVTIAHSRTENLAEITRSADILVPAVGKANLITKDMVKPGAVVVDVGINRVADRLVGDVDYAGVLEVASYLTPVPGGVGPMTVAMLLKNTLLSYERKL.

NADP(+) is bound by residues Gly169 to Ser171, Ser194, and Ile235.

It belongs to the tetrahydrofolate dehydrogenase/cyclohydrolase family. As to quaternary structure, homodimer.

The enzyme catalyses (6R)-5,10-methylene-5,6,7,8-tetrahydrofolate + NADP(+) = (6R)-5,10-methenyltetrahydrofolate + NADPH. It catalyses the reaction (6R)-5,10-methenyltetrahydrofolate + H2O = (6R)-10-formyltetrahydrofolate + H(+). Its pathway is one-carbon metabolism; tetrahydrofolate interconversion. In terms of biological role, catalyzes the oxidation of 5,10-methylenetetrahydrofolate to 5,10-methenyltetrahydrofolate and then the hydrolysis of 5,10-methenyltetrahydrofolate to 10-formyltetrahydrofolate. The sequence is that of Bifunctional protein FolD from Microcystis aeruginosa (strain NIES-843 / IAM M-2473).